A 241-amino-acid chain; its full sequence is FKBP-type peptidyl-prolyl cis-trans isomerase FkpA (241 aa).

Residues 153–241 (ETKITVHYKG…IELLDVVNGV (89 aa)) form the PPIase FKBP-type domain.

This sequence belongs to the FKBP-type PPIase family.

The catalysed reaction is [protein]-peptidylproline (omega=180) = [protein]-peptidylproline (omega=0). Functionally, PPIases accelerate the folding of proteins. It catalyzes the cis-trans isomerization of proline imidic peptide bonds in oligopeptides. This chain is FKBP-type peptidyl-prolyl cis-trans isomerase FkpA (fkpA), found in Buchnera aphidicola subsp. Acyrthosiphon pisum (strain APS) (Acyrthosiphon pisum symbiotic bacterium).